Here is a 410-residue protein sequence, read N- to C-terminus: Argininosuccinate synthase (410 aa).

10–18 (AYSGGLDTS) contacts ATP. 2 residues coordinate L-citrulline: Y88 and S93. Residue G118 coordinates ATP. Positions 120, 124, and 125 each coordinate L-aspartate. N124 provides a ligand contact to L-citrulline. R128, S177, S186, E262, and Y274 together coordinate L-citrulline.

This sequence belongs to the argininosuccinate synthase family. Type 1 subfamily. In terms of assembly, homotetramer.

It localises to the cytoplasm. The catalysed reaction is L-citrulline + L-aspartate + ATP = 2-(N(omega)-L-arginino)succinate + AMP + diphosphate + H(+). It participates in amino-acid biosynthesis; L-arginine biosynthesis; L-arginine from L-ornithine and carbamoyl phosphate: step 2/3. The sequence is that of Argininosuccinate synthase from Caldanaerobacter subterraneus subsp. tengcongensis (strain DSM 15242 / JCM 11007 / NBRC 100824 / MB4) (Thermoanaerobacter tengcongensis).